Here is a 162-residue protein sequence, read N- to C-terminus: Large ribosomal subunit protein bL17 (162 aa).

A disordered region spans residues 126–162 (KKEEVKTKSRRGGKAKKAEPTTEAPANTTEETTDSAE). Positions 146–155 (TTEAPANTTE) are enriched in low complexity.

Belongs to the bacterial ribosomal protein bL17 family. As to quaternary structure, part of the 50S ribosomal subunit. Contacts protein L32.

The polypeptide is Large ribosomal subunit protein bL17 (Flavobacterium psychrophilum (strain ATCC 49511 / DSM 21280 / CIP 103535 / JIP02/86)).